The sequence spans 227 residues: NADH-quinone oxidoreductase subunit C (227 aa).

It belongs to the complex I 30 kDa subunit family. As to quaternary structure, NDH-1 is composed of 14 different subunits. Subunits NuoB, C, D, E, F, and G constitute the peripheral sector of the complex.

The protein resides in the cell inner membrane. The enzyme catalyses a quinone + NADH + 5 H(+)(in) = a quinol + NAD(+) + 4 H(+)(out). Its function is as follows. NDH-1 shuttles electrons from NADH, via FMN and iron-sulfur (Fe-S) centers, to quinones in the respiratory chain. The immediate electron acceptor for the enzyme in this species is believed to be ubiquinone. Couples the redox reaction to proton translocation (for every two electrons transferred, four hydrogen ions are translocated across the cytoplasmic membrane), and thus conserves the redox energy in a proton gradient. This chain is NADH-quinone oxidoreductase subunit C, found in Legionella pneumophila subsp. pneumophila (strain Philadelphia 1 / ATCC 33152 / DSM 7513).